Here is a 475-residue protein sequence, read N- to C-terminus: MPPKRKSSPKGKTPTVVDGLSTEEMSKEQLEEHIMRLREELDREREERNYFQLERDKIHTFWEITRRHLEENKCELRNRERELEEVEERHQVEIKVYKQKVKHLLYEQQNMLSELKAESIISTKLLQDEHADLEKEQWKDMRSLKLELKQQELSSENVLKRIHLKHDEETTDLRNDFARQVQEIGSKYEKRMQKLRQEEELRRKTEIHEIEERKNTHINMLMKNHEKAFRDIRNYFSDIVYKNLDLITSLKEELKEMKKNEEKRNKEMAEVLEQNKELKESSQKAKEQVAELQKQLANYEKDKSILTRSRARLKMSDREMKELKWELEVLEQRFSKVQLERDELYMKFTKAILEVQQKSGFKNLLLECKLNTLNDTLEKKEAQLSEVLSASNLDPTTLSVVTHKLEEVLESKNHTIKDLQYEVARVCKAHNDLLKTSEAKLRAFGIPVEELCFEPLKSNGQSVGQGPAMFVSSSN.

A disordered region spans residues M1–T22. Positions M1–S113 are regulates microtubule-binding. 3 coiled-coil regions span residues L20–L104, R142–E200, and K242–V426. The tract at residues E114 to M257 is microtubule-binding.

This sequence belongs to the DRC4 family. As to quaternary structure, component of the nexin-dynein regulatory complex (N-DRC). Interacts with microtubules.

The protein localises to the cytoplasm. It localises to the cytoskeleton. It is found in the cell projection. The protein resides in the cilium. Its subcellular location is the flagellum. The protein localises to the cilium axoneme. It localises to the cilium basal body. It is found in the golgi apparatus. The protein resides in the flagellum axoneme. Functionally, component of the nexin-dynein regulatory complex (N-DRC), a key regulator of ciliary/flagellar motility which maintains the alignment and integrity of the distal axoneme and regulates microtubule sliding in motile axonemes. Plays an important role in the assembly of the N-DRC linker. Plays dual roles at both the primary (or non-motile) cilia to regulate hedgehog signaling and in motile cilia to coordinate cilia movement. Required for proper slow muscle development and positively regulates ciliary smoothened (SMO)-dependent Hedgehog (Hh) signaling pathway. Required for tether cilia motility which is essential for normal otolith formation and localization in the developing inner ear. The protein is Dynein regulatory complex subunit 4 (gas8) of Danio rerio (Zebrafish).